The sequence spans 103 residues: Truncated secreted TNF-receptor-like protein A53R (103 aa).

A TNFR-Cys 1 repeat occupies 36 to 73; that stretch reads SCDKGEYLDKRHNQCCNRCPPGEFAKVRCNGNDNTKCE. 3 disulfide bridges follow: cysteine 37–cysteine 50, cysteine 51–cysteine 64, and cysteine 54–cysteine 72. Residues 74-103 form a TNFR-Cys 2; truncated repeat; it reads RCPPHTYTTIPIILMDVINVENAQPDHLIR.

The protein belongs to the poxviridae A53R protein family.

This is Truncated secreted TNF-receptor-like protein A53R from Vaccinia virus (strain Western Reserve) (VACV).